Here is a 228-residue protein sequence, read N- to C-terminus: MARERREIKRIESAAARQVTFSKRRRGLFKKAEELSVLCDADVALIVFSSTGKLSHFASSSMNEIIDKYNTHSNNLGKAEQPSLDLNLEHSKYAHLNEQLAEASLRLRQMRGEELEGLSIDELQQLEKNLEAGLHRVMLTKDQQFMEQISELQRKSSQLAEENMQLRNQVSQISPAEKQVVDTENFVTEGQSSESVMTALHSGSSQSQDNDDGSDVSLKLGLPCGAWK.

The MADS-box domain maps to 1–61; it reads MARERREIKR…GKLSHFASSS (61 aa). The K-box domain maps to 86–176; the sequence is LNLEHSKYAH…RNQVSQISPA (91 aa). Residues 189-217 form a disordered region; it reads EGQSSESVMTALHSGSSQSQDNDDGSDVS.

In terms of tissue distribution, expressed in palea and stamen primordia. Expressed in shoots and coleoptiles.

It localises to the nucleus. In terms of biological role, probable transcription factor. May be required for spikelet (rice flower) development. Transcription factor that functions to support the MADS55 in its function as negative regulator of brassinosteroid signaling. In Oryza sativa subsp. japonica (Rice), this protein is MADS-box transcription factor 22 (MADS22).